Reading from the N-terminus, the 55-residue chain is Ribosome modulation factor (55 aa).

This sequence belongs to the ribosome modulation factor family. In terms of assembly, associates exclusively with 100S ribosomes.

It localises to the cytoplasm. During stationary phase, converts 70S ribosomes to an inactive dimeric form (100S ribosomes). May form immature 90S particles, which are converted to mature 100S ribosomes by the hibernation promoting factor Hpf. The polypeptide is Ribosome modulation factor (Escherichia coli O157:H7).